The sequence spans 95 residues: Large ribosomal subunit protein bL25 (95 aa).

It belongs to the bacterial ribosomal protein bL25 family. As to quaternary structure, part of the 50S ribosomal subunit; part of the 5S rRNA/L5/L18/L25 subcomplex. Contacts the 5S rRNA. Binds to the 5S rRNA independently of L5 and L18.

This is one of the proteins that binds to the 5S RNA in the ribosome where it forms part of the central protuberance. This Actinobacillus pleuropneumoniae serotype 3 (strain JL03) protein is Large ribosomal subunit protein bL25.